A 182-amino-acid polypeptide reads, in one-letter code: Large ribosomal subunit protein bL25 (182 aa).

Belongs to the bacterial ribosomal protein bL25 family. CTC subfamily. In terms of assembly, part of the 50S ribosomal subunit; part of the 5S rRNA/L5/L18/L25 subcomplex. Contacts the 5S rRNA. Binds to the 5S rRNA independently of L5 and L18.

Functionally, this is one of the proteins that binds to the 5S RNA in the ribosome where it forms part of the central protuberance. In Borrelia duttonii (strain Ly), this protein is Large ribosomal subunit protein bL25.